The following is a 336-amino-acid chain: Sodium/bile acid cotransporter 7 (336 aa).

Residues 1–10 (MGLIARVRKE) are Cytoplasmic-facing. Residues 11–31 (WFIIGIVLVITFAKLQPSVGV) traverse the membrane as a helical segment. Residues 32 to 37 (KGGPLH) are Extracellular-facing. The chain crosses the membrane as a helical span at residues 38–58 (PEITITYVAVSVIFFNSGLSL). The Cytoplasmic portion of the chain corresponds to 59-71 (KTEELASALMHVK). A helical membrane pass occupies residues 72–92 (LHFFVQTFTLVFFPIAIWLLL). Residues 93 to 116 (KVLALTAINEWLLRGLQTVACMPP) are Extracellular-facing. The chain crosses the membrane as a helical span at residues 117-137 (PVSSAVILTKAVGGNEAAAIF). Asn138 is a topological domain (cytoplasmic). The helical transmembrane segment at 139–159 (SAFGSFLGIVVTPLLLLVFLG) threads the bilayer. Residues 160-163 (SSSS) lie on the Extracellular side of the membrane. The helical transmembrane segment at 164-184 (VPFTSIFSQLFMTVVVPLIVG) threads the bilayer. Topologically, residues 185–201 (QVCRRFLRECLDRRKPP) are cytoplasmic. Residues 202–222 (FGAVSSVVLLMIIYSTFCDTF) form a helical membrane-spanning segment. At 223–233 (NNPNIELDHLS) the chain is on the extracellular side. Residues 234–254 (LLTVVFIIFSIQLSFMALIFF) form a helical membrane-spanning segment. Residues 255 to 270 (LSTRKSSGFSAADSVA) are Cytoplasmic-facing. A helical transmembrane segment spans residues 271-291 (IMFCATHKSLTLGIPMLKIVF). At 292-298 (EGYEHLS) the chain is on the extracellular side. The chain crosses the membrane as a helical span at residues 299-319 (LISVPLLIYHPAQILLGSVLL). The Cytoplasmic portion of the chain corresponds to 320–336 (PSIKTWMSGRQKTLTPI).

This sequence belongs to the bile acid:sodium symporter (BASS) (TC 2.A.28) family.

It is found in the cell membrane. The protein localises to the endoplasmic reticulum membrane. Its subcellular location is the golgi apparatus membrane. Involved in teeth and skeletal development. Has an essential role in the biosynthesis and trafficking of glycosaminoglycans and glycoproteins to produce a proper functioning extracellular matrix. Required for extracellular matrix mineralization. Also involved in the regulation of cellular calcium homeostasis. Does not show transport activity towards bile acids or steroid sulfates. This is Sodium/bile acid cotransporter 7 (slc10a7) from Danio rerio (Zebrafish).